A 348-amino-acid polypeptide reads, in one-letter code: Rhodopsin (348 aa).

The Extracellular portion of the chain corresponds to 1 to 33 (TEGPYFYIPMVNTTGIVRSPYEYPQYYLVNPAA). Residue N12 is glycosylated (N-linked (GlcNAc...) asparagine). A helical membrane pass occupies residues 34–58 (YAMLGAYMFFLIIVGFPVNFMTLYV). The Cytoplasmic segment spans residues 59–70 (TLEHKKLRTPLN). Residues 71–93 (YILLNLAVADLFMVIGGFTTTIY) traverse the membrane as a helical segment. At 94–107 (TSMHGYFVLGRLGC) the chain is on the extracellular side. Residues C107 and C184 are joined by a disulfide bond. Residues 108–130 (NIEGFFATLGGMISLWSLAVLAI) form a helical membrane-spanning segment. The 'Ionic lock' involved in activated form stabilization signature appears at 131–133 (ERW). Topologically, residues 131–149 (ERWVVVCKPISNFRFGENH) are cytoplasmic. Residues 150-170 (AIMGVSLTWAMALACTVPPLV) traverse the membrane as a helical segment. Topologically, residues 171-199 (GWSRYIPEGMQCSCGIDYYTRAEGFNNES) are extracellular. N-linked (GlcNAc...) asparagine glycosylation is present at N197. The helical transmembrane segment at 200 to 221 (FVLYMFFCHFTIPLTIIFFCYG) threads the bilayer. At 222-249 (RLLCAVKEAAAAQQESETTQRAEREVTR) the chain is on the cytoplasmic side. The helical transmembrane segment at 250–271 (MVIIMVIGFLICWLPYASVAWF) threads the bilayer. Residues 272–283 (IFTHQGSEFGPL) lie on the Extracellular side of the membrane. The chain crosses the membrane as a helical span at residues 284 to 305 (FMTIPAFFAKSSSIYNPMIYIC). At K293 the chain carries N6-(retinylidene)lysine. Residues 306 to 348 (MNKQFRHCMITTLFCGKNPFEGEEEGASSTKTEASSASSVSPA) lie on the Cytoplasmic side of the membrane. Residue C320 is the site of S-palmitoyl cysteine attachment. A disordered region spans residues 327 to 348 (GEEEGASSTKTEASSASSVSPA). Positions 332 to 348 (ASSTKTEASSASSVSPA) are enriched in low complexity.

The protein belongs to the G-protein coupled receptor 1 family. Opsin subfamily. Phosphorylated on some or all of the serine and threonine residues present in the C-terminal region. Post-translationally, contains one covalently linked retinal chromophore.

The protein localises to the membrane. The protein resides in the cell projection. It localises to the cilium. Its subcellular location is the photoreceptor outer segment. Photoreceptor required for image-forming vision at low light intensity. While most salt water fish species use retinal as chromophore, most freshwater fish use 3-dehydroretinal, or a mixture of retinal and 3-dehydroretinal. Light-induced isomerization of 11-cis to all-trans retinal triggers a conformational change that activates signaling via G-proteins. Subsequent receptor phosphorylation mediates displacement of the bound G-protein alpha subunit by arrestin and terminates signaling. This is Rhodopsin (rho) from Sargocentron microstoma (Smallmouth squirrelfish).